The following is a 734-amino-acid chain: Photosystem I P700 chlorophyll a apoprotein A2 (734 aa).

8 helical membrane-spanning segments follow: residues 46 to 69, 135 to 158, 175 to 199, 273 to 291, 330 to 353, 369 to 395, 417 to 439, and 517 to 535; these read IFAS…FHVA, LYVG…LHLQ, LNHH…HVAI, MAHH…GHMY, LHFQ…QHMY, ASLY…IFFV, AIIS…LYVH, and FLVH…LILV. The [4Fe-4S] cluster site is built by Cys-559 and Cys-568. A run of 2 helical transmembrane segments spans residues 575–596 and 643–665; these read AFYL…YFHW and LSVW…MFLI. The chlorophyll a site is built by His-654, Met-662, and Tyr-670. Residue Trp-671 coordinates phylloquinone. A helical transmembrane segment spans residues 707-727; that stretch reads LVGLTHFSVGYVLTYAAFLIA.

It belongs to the PsaA/PsaB family. As to quaternary structure, the PsaA/B heterodimer binds the P700 chlorophyll special pair and subsequent electron acceptors. PSI consists of a core antenna complex that captures photons, and an electron transfer chain that converts photonic excitation into a charge separation. The eukaryotic PSI reaction center is composed of at least 11 subunits. It depends on P700 is a chlorophyll a/chlorophyll a' dimer, A0 is one or more chlorophyll a, A1 is one or both phylloquinones and FX is a shared 4Fe-4S iron-sulfur center. as a cofactor.

The protein resides in the plastid. It localises to the chloroplast thylakoid membrane. The catalysed reaction is reduced [plastocyanin] + hnu + oxidized [2Fe-2S]-[ferredoxin] = oxidized [plastocyanin] + reduced [2Fe-2S]-[ferredoxin]. Its function is as follows. PsaA and PsaB bind P700, the primary electron donor of photosystem I (PSI), as well as the electron acceptors A0, A1 and FX. PSI is a plastocyanin/cytochrome c6-ferredoxin oxidoreductase, converting photonic excitation into a charge separation, which transfers an electron from the donor P700 chlorophyll pair to the spectroscopically characterized acceptors A0, A1, FX, FA and FB in turn. Oxidized P700 is reduced on the lumenal side of the thylakoid membrane by plastocyanin or cytochrome c6. The sequence is that of Photosystem I P700 chlorophyll a apoprotein A2 from Chlorella vulgaris (Green alga).